Consider the following 123-residue polypeptide: Urotensin-2 (123 aa).

A signal peptide spans 1-20; the sequence is MDRVPFCCLLFVGLLNPLLS. The propeptide occupies 21–104; sequence FPVTDTGEMS…TVLSRLLART (84 aa). The segment at 63-91 is disordered; sequence EAEGSLGQADPSAETPTPRGSLRKALTGQ. C117 and C122 are oxidised to a cystine.

It belongs to the urotensin-2 family. Brain specific.

The protein resides in the secreted. Functionally, highly potent vasoconstrictor. This chain is Urotensin-2 (Uts2), found in Rattus norvegicus (Rat).